Reading from the N-terminus, the 172-residue chain is Bifunctional protein PyrR (172 aa).

A PRPP-binding motif is present at residues 93–105 (VILIDDVLYTGRT).

It belongs to the purine/pyrimidine phosphoribosyltransferase family. PyrR subfamily. Homodimer and homohexamer; in equilibrium.

The enzyme catalyses UMP + diphosphate = 5-phospho-alpha-D-ribose 1-diphosphate + uracil. In terms of biological role, regulates transcriptional attenuation of the pyrimidine nucleotide (pyr) operon by binding in a uridine-dependent manner to specific sites on pyr mRNA. This disrupts an antiterminator hairpin in the RNA and favors formation of a downstream transcription terminator, leading to a reduced expression of downstream genes. Its function is as follows. Also displays a weak uracil phosphoribosyltransferase activity which is not physiologically significant. The chain is Bifunctional protein PyrR from Streptococcus sanguinis (strain SK36).